Consider the following 311-residue polypeptide: N-acetylmuramic acid 6-phosphate etherase (311 aa).

The SIS domain occupies 66–229 (VADRMARGGR…STITMIRLGK (164 aa)). E94 (proton donor) is an active-site residue. The active site involves E125.

Belongs to the GCKR-like family. MurNAc-6-P etherase subfamily. Homodimer.

It carries out the reaction N-acetyl-D-muramate 6-phosphate + H2O = N-acetyl-D-glucosamine 6-phosphate + (R)-lactate. Its pathway is amino-sugar metabolism; N-acetylmuramate degradation. In terms of biological role, specifically catalyzes the cleavage of the D-lactyl ether substituent of MurNAc 6-phosphate, producing GlcNAc 6-phosphate and D-lactate. The polypeptide is N-acetylmuramic acid 6-phosphate etherase (Streptomyces avermitilis (strain ATCC 31267 / DSM 46492 / JCM 5070 / NBRC 14893 / NCIMB 12804 / NRRL 8165 / MA-4680)).